A 531-amino-acid polypeptide reads, in one-letter code: NADH-quinone oxidoreductase subunit N (531 aa).

The next 14 helical transmembrane spans lie at V8–L28, A41–A61, A81–A101, G146–F166, L172–L192, F208–A228, A250–F270, P282–L302, P318–Q338, V350–A370, L372–V392, I418–G438, G453–V473, and A500–L520.

Belongs to the complex I subunit 2 family. As to quaternary structure, NDH-1 is composed of 14 different subunits. Subunits NuoA, H, J, K, L, M, N constitute the membrane sector of the complex.

The protein resides in the cell membrane. It carries out the reaction a quinone + NADH + 5 H(+)(in) = a quinol + NAD(+) + 4 H(+)(out). Its function is as follows. NDH-1 shuttles electrons from NADH, via FMN and iron-sulfur (Fe-S) centers, to quinones in the respiratory chain. The immediate electron acceptor for the enzyme in this species is believed to be a menaquinone. Couples the redox reaction to proton translocation (for every two electrons transferred, four hydrogen ions are translocated across the cytoplasmic membrane), and thus conserves the redox energy in a proton gradient. The chain is NADH-quinone oxidoreductase subunit N from Mycobacterium tuberculosis (strain CDC 1551 / Oshkosh).